A 289-amino-acid chain; its full sequence is Cell division protein ZipA (289 aa).

A topological domain (periplasmic) is located at residue Met-1. Residues 2–22 (DIGLREWLIVIGLIVIAGILF) form a helical membrane-spanning segment. The Cytoplasmic segment spans residues 23–289 (DGWRRMRGGK…HERRSLMQKR (267 aa)). Residues 66 to 141 (REPSFDEQDL…KEREKAPAVA (76 aa)) are disordered. A compositionally biased stretch (basic and acidic residues) spans 81–99 (REAKERKGGKRQEEPRQGD). The segment covering 100-114 (LDLDEGLALEADPSD) has biased composition (acidic residues).

This sequence belongs to the ZipA family. As to quaternary structure, interacts with FtsZ via their C-terminal domains.

It localises to the cell inner membrane. In terms of biological role, essential cell division protein that stabilizes the FtsZ protofilaments by cross-linking them and that serves as a cytoplasmic membrane anchor for the Z ring. Also required for the recruitment to the septal ring of downstream cell division proteins. This Pseudomonas aeruginosa (strain LESB58) protein is Cell division protein ZipA.